The following is a 409-amino-acid chain: CUB domain-containing protein (409 aa).

The signal sequence occupies residues 1–18; the sequence is MFLFSLTVLSALVLITES. Positions 154-229 are enriched in low complexity; that stretch reads TEASTTAQET…TTAPTTAPAP (76 aa). Residues 154 to 230 form a disordered region; it reads TEASTTAQET…TAPTTAPAPI (77 aa). Cysteines 232 and 257 form a disulfide. The 107-residue stretch at 232–338 folds into the CUB domain; sequence CGGVLRGRGT…QEYVDYYYYD (107 aa). A disordered region spans residues 389 to 409; that stretch reads VQGAADSESEASASSESSDED. Residues 392 to 409 show a composition bias toward low complexity; that stretch reads AADSESEASASSESSDED.

As to expression, component of the acid-insoluble and acid-soluble organic matrix of the aragonitic skeleton (at protein level).

It is found in the secreted. In Acropora millepora (Staghorn coral), this protein is CUB domain-containing protein.